The primary structure comprises 229 residues: Octanoyltransferase (229 aa).

Residues 45 to 220 (ATAVDELWVV…ELARQFCFVL (176 aa)) enclose the BPL/LPL catalytic domain. Residues 84–91 (RGGQVTYH), 151–153 (ALG), and 164–166 (GVA) contribute to the substrate site. Cys182 serves as the catalytic Acyl-thioester intermediate.

It belongs to the LipB family.

It is found in the cytoplasm. The enzyme catalyses octanoyl-[ACP] + L-lysyl-[protein] = N(6)-octanoyl-L-lysyl-[protein] + holo-[ACP] + H(+). It functions in the pathway protein modification; protein lipoylation via endogenous pathway; protein N(6)-(lipoyl)lysine from octanoyl-[acyl-carrier-protein]: step 1/2. Catalyzes the transfer of endogenously produced octanoic acid from octanoyl-acyl-carrier-protein onto the lipoyl domains of lipoate-dependent enzymes. Lipoyl-ACP can also act as a substrate although octanoyl-ACP is likely to be the physiological substrate. This Xylella fastidiosa (strain 9a5c) protein is Octanoyltransferase.